The chain runs to 452 residues: Exodeoxyribonuclease 7 large subunit (452 aa).

The protein belongs to the XseA family. Heterooligomer composed of large and small subunits.

Its subcellular location is the cytoplasm. The catalysed reaction is Exonucleolytic cleavage in either 5'- to 3'- or 3'- to 5'-direction to yield nucleoside 5'-phosphates.. Its function is as follows. Bidirectionally degrades single-stranded DNA into large acid-insoluble oligonucleotides, which are then degraded further into small acid-soluble oligonucleotides. This is Exodeoxyribonuclease 7 large subunit from Lysinibacillus sphaericus (strain C3-41).